Reading from the N-terminus, the 341-residue chain is NADH-quinone oxidoreductase subunit H 1 (341 aa).

Transmembrane regions (helical) follow at residues 13–33 (LVVI…IAYI), 82–102 (GVFL…WAVI), 115–135 (VGVL…IMAG), 161–181 (IGFV…TAIV), 190–210 (LLGW…VSAL), 248–268 (YVAI…GWLP), 277–297 (WVPG…LFAM), and 317–337 (VFLP…QFAG).

The protein belongs to the complex I subunit 1 family. NDH-1 is composed of 14 different subunits. Subunits NuoA, H, J, K, L, M, N constitute the membrane sector of the complex.

Its subcellular location is the cell inner membrane. It catalyses the reaction a quinone + NADH + 5 H(+)(in) = a quinol + NAD(+) + 4 H(+)(out). In terms of biological role, NDH-1 shuttles electrons from NADH, via FMN and iron-sulfur (Fe-S) centers, to quinones in the respiratory chain. The immediate electron acceptor for the enzyme in this species is believed to be ubiquinone. Couples the redox reaction to proton translocation (for every two electrons transferred, four hydrogen ions are translocated across the cytoplasmic membrane), and thus conserves the redox energy in a proton gradient. This subunit may bind ubiquinone. In Rhodopseudomonas palustris (strain BisB18), this protein is NADH-quinone oxidoreductase subunit H 1.